Reading from the N-terminus, the 73-residue chain is Large ribosomal subunit protein uL29 (73 aa).

The protein belongs to the universal ribosomal protein uL29 family.

This is Large ribosomal subunit protein uL29 (rpl29) from Saccharolobus solfataricus (strain ATCC 35092 / DSM 1617 / JCM 11322 / P2) (Sulfolobus solfataricus).